The sequence spans 199 residues: MPHSERGMVVGLFGGSFNPPHQGHALVAEIAIKRLRLDQLWWMVTPGNPLKSRNQLAPLAERLAESERVAADPRIKVTAFEQTLGTSYTANTLARVKARNPHVHFIWIMGADSLQTFHKWQKWQEIARTFPIAVIDRPGATLSFLSSKMARTFGFARVDEDDARVLWKKRAPAWTFIHGPRSGLSSTAIRNGSSHSDAE.

This sequence belongs to the NadD family.

It carries out the reaction nicotinate beta-D-ribonucleotide + ATP + H(+) = deamido-NAD(+) + diphosphate. It functions in the pathway cofactor biosynthesis; NAD(+) biosynthesis; deamido-NAD(+) from nicotinate D-ribonucleotide: step 1/1. Catalyzes the reversible adenylation of nicotinate mononucleotide (NaMN) to nicotinic acid adenine dinucleotide (NaAD). This Rhizobium johnstonii (strain DSM 114642 / LMG 32736 / 3841) (Rhizobium leguminosarum bv. viciae) protein is Probable nicotinate-nucleotide adenylyltransferase.